A 150-amino-acid polypeptide reads, in one-letter code: Ribosome maturation factor RimP (150 aa).

It belongs to the RimP family.

It localises to the cytoplasm. Functionally, required for maturation of 30S ribosomal subunits. The protein is Ribosome maturation factor RimP of Thermotoga maritima (strain ATCC 43589 / DSM 3109 / JCM 10099 / NBRC 100826 / MSB8).